The sequence spans 218 residues: Cytochrome P450 3A19 (218 aa).

Residue Cys-153 participates in heme binding.

It belongs to the cytochrome P450 family. Requires heme as cofactor.

The protein resides in the endoplasmic reticulum membrane. It is found in the microsome membrane. It catalyses the reaction an organic molecule + reduced [NADPH--hemoprotein reductase] + O2 = an alcohol + oxidized [NADPH--hemoprotein reductase] + H2O + H(+). Its function is as follows. Cytochromes P450 are a group of heme-thiolate monooxygenases. In liver microsomes, this enzyme is involved in an NADPH-dependent electron transport pathway. It oxidizes a variety of structurally unrelated compounds, including steroids, fatty acids, and xenobiotics. The chain is Cytochrome P450 3A19 (CYP3A19) from Capra hircus aegagrus (Wild goat).